The chain runs to 416 residues: Hemagglutinin-esterase (416 aa).

The signal sequence occupies residues 1-14 (MLSLILFFPSFAFA). The interval 4–121 (LILFFPSFAF…GVDSYMELKT (118 aa)) is esterase domain first part. Residues 15–393 (VTPVTPYFGP…ESVDVISSSY (379 aa)) lie on the Virion surface side of the membrane. S37 functions as the Nucleophile in the catalytic mechanism. Cysteines 41 and 57 form a disulfide. Residues N59 and N76 are each glycosylated (N-linked (GlcNAc...) asparagine; by host). 5 disulfide bridges follow: C88–C136, C108–C156, C192–C273, C200–C246, and C206–C213. Residues 122–263 (SFNIKLNQMA…GTHNASIVGN (142 aa)) form a receptor binding region. N-linked (GlcNAc...) asparagine; by host glycans are attached at residues N257, N278, and N294. The tract at residues 264-379 (FLFYPTKSYC…SCPQYVKLFD (116 aa)) is esterase domain second part. C304 and C309 are disulfide-bonded. N322 is a glycosylation site (N-linked (GlcNAc...) asparagine; by host). H328 (charge relay system) is an active-site residue. N343 is a glycosylation site (N-linked (GlcNAc...) asparagine; by host). A disulfide bridge links C346 with C371. The helical transmembrane segment at 394–414 (FVATWVLLVVVVILIFVIISF) threads the bilayer. Residues 415 to 416 (FC) lie on the Intravirion side of the membrane.

This sequence belongs to the influenza type C/coronaviruses hemagglutinin-esterase family. In terms of assembly, homodimer. N-glycosylated.

The protein localises to the virion membrane. The protein resides in the host cell membrane. The catalysed reaction is N-acetyl-9-O-acetylneuraminate + H2O = N-acetylneuraminate + acetate + H(+). The enzyme catalyses N-acetyl-4-O-acetylneuraminate + H2O = N-acetylneuraminate + acetate + H(+). Structural protein that makes short spikes at the surface of the virus. Contains receptor binding and receptor-destroying activities. Mediates de-O-acetylation of N-acetyl-9-O-acetylneuraminic acid, which is probably the receptor determinant recognized by the virus on the surface of erythrocytes and susceptible cells. This receptor-destroying activity is important for virus release as it probably helps preventing self-aggregation and ensures the efficient spread of the progeny virus from cell to cell. May serve as a secondary viral attachment protein for initiating infection, the spike protein being the major one. Seems to be a 'luxury' protein that is not absolutely necessary for virus infection in culture. However, its presence in the virus may alter its pathogenicity. May become a target for both the humoral and the cellular branches of the immune system. This Homo sapiens (Human) protein is Hemagglutinin-esterase (HE).